The sequence spans 943 residues: Translation initiation factor IF-2 (943 aa).

The interval 46-359 (IKGMLSKQSA…MPQRKERPLP (314 aa)) is disordered. Residues 57-76 (KAPSSQAAKTPAKAAKTSSA) show a composition bias toward low complexity. Composition is skewed to basic and acidic residues over residues 92–103 (SNDHADVAEHSQ) and 110–124 (AKQE…KTSD). Positions 130–141 (SKSTILRPRSTQ) are enriched in polar residues. Low complexity predominate over residues 142-190 (TAHTNTNHNRGGNTASANNTANGRNSNRSNNNNNNRSANNANRSGNNNR). 3 stretches are compositionally biased toward basic and acidic residues: residues 191–205 (SNER…RFDN), 239–250 (ASERQQPKRQEA), and 259–271 (KRSE…RPRT). Low complexity-rich tracts occupy residues 289-299 (PAAAAPKPASA) and 315-330 (NFGR…GFNR). Residues 331-342 (NNRRNKKNKRRQ) are compositionally biased toward basic residues. The segment covering 346–358 (PKKEMPQRKERPL) has biased composition (basic and acidic residues). In terms of domain architecture, tr-type G spans 444–613 (PRPPVVTIMG…LLEADVLELK (170 aa)). Positions 453–460 (GHVDHGKT) are G1. A GTP-binding site is contributed by 453–460 (GHVDHGKT). The interval 478-482 (GITQH) is G2. The tract at residues 499 to 502 (DTPG) is G3. GTP contacts are provided by residues 499 to 503 (DTPGH) and 553 to 556 (NKID). Residues 553 to 556 (NKID) form a G4 region. Positions 589–591 (SAK) are G5.

The protein belongs to the TRAFAC class translation factor GTPase superfamily. Classic translation factor GTPase family. IF-2 subfamily.

The protein resides in the cytoplasm. Functionally, one of the essential components for the initiation of protein synthesis. Protects formylmethionyl-tRNA from spontaneous hydrolysis and promotes its binding to the 30S ribosomal subunits. Also involved in the hydrolysis of GTP during the formation of the 70S ribosomal complex. The chain is Translation initiation factor IF-2 from Lacticaseibacillus casei (strain BL23) (Lactobacillus casei).